Here is a 68-residue protein sequence, read N- to C-terminus: Alpha-conotoxin-like Lp1.2 (68 aa).

The first 21 residues, 1–21 (MGMRMMFTVFLLVVLATTVVS), serve as a signal peptide directing secretion. A propeptide spanning residues 22-48 (FTSDRAFDGRNAAASDKASDLISLAVR) is cleaved from the precursor. 2 disulfides stabilise this stretch: C50-C56 and C51-C64. The tract at residues 52–54 (SHP) is ser-Xaa-Pro motif, crucial for potent interaction with nAChR. C64 is modified (cysteine amide). Positions 65-68 (GGKR) are excised as a propeptide.

It belongs to the conotoxin A superfamily. In terms of tissue distribution, expressed by the venom duct.

It localises to the secreted. Alpha-conotoxins act on postsynaptic membranes, they bind to the nicotinic acetylcholine receptors (nAChR) and thus inhibit them. The protein is Alpha-conotoxin-like Lp1.2 of Conus leopardus (Leopard cone).